The primary structure comprises 348 residues: WW domain binding protein 1-like (348 aa).

The helical transmembrane segment at 42–62 (LWWFWLVWTVVIILSCCCVCH) threads the bilayer. Disordered stretches follow at residues 111-253 (VVNR…RRFT) and 306-348 (CLSS…GSPS). A compositionally biased stretch (pro residues) spans 134-155 (LPPPPQGGPPGGSPPGADPPPQ). Residues 156–177 (GSQGAQSSPLSGPSRSSTRPPS) are compositionally biased toward low complexity. Ser-177 bears the Phosphoserine mark. Over residues 220–234 (SECKEELLKDSRSER) the composition is skewed to basic and acidic residues. The segment covering 331–348 (NTINEQDSPNSQHSGSPS) has biased composition (polar residues).

Its subcellular location is the membrane. The protein is WW domain binding protein 1-like (Wbp1l) of Mus musculus (Mouse).